The chain runs to 358 residues: 4-hydroxy-3-methylbut-2-en-1-yl diphosphate synthase (flavodoxin) (358 aa).

[4Fe-4S] cluster-binding residues include Cys-270, Cys-273, Cys-305, and Glu-312.

Belongs to the IspG family. It depends on [4Fe-4S] cluster as a cofactor.

The enzyme catalyses (2E)-4-hydroxy-3-methylbut-2-enyl diphosphate + oxidized [flavodoxin] + H2O + 2 H(+) = 2-C-methyl-D-erythritol 2,4-cyclic diphosphate + reduced [flavodoxin]. It participates in isoprenoid biosynthesis; isopentenyl diphosphate biosynthesis via DXP pathway; isopentenyl diphosphate from 1-deoxy-D-xylulose 5-phosphate: step 5/6. Converts 2C-methyl-D-erythritol 2,4-cyclodiphosphate (ME-2,4cPP) into 1-hydroxy-2-methyl-2-(E)-butenyl 4-diphosphate. This Ruthia magnifica subsp. Calyptogena magnifica protein is 4-hydroxy-3-methylbut-2-en-1-yl diphosphate synthase (flavodoxin).